A 465-amino-acid polypeptide reads, in one-letter code: Adenosylhomocysteinase (465 aa).

Positions 56, 131, and 191 each coordinate substrate. 192 to 194 (TTT) is an NAD(+) binding site. 2 residues coordinate substrate: Lys-221 and Asp-225. Residues Asn-226, 255-260 (GYGNVG), Glu-278, Asn-313, 334-336 (IGH), and Asn-379 contribute to the NAD(+) site.

Belongs to the adenosylhomocysteinase family. NAD(+) serves as cofactor.

Its subcellular location is the cytoplasm. It carries out the reaction S-adenosyl-L-homocysteine + H2O = L-homocysteine + adenosine. It participates in amino-acid biosynthesis; L-homocysteine biosynthesis; L-homocysteine from S-adenosyl-L-homocysteine: step 1/1. Functionally, may play a key role in the regulation of the intracellular concentration of adenosylhomocysteine. In Bartonella quintana (strain Toulouse) (Rochalimaea quintana), this protein is Adenosylhomocysteinase.